A 1432-amino-acid chain; its full sequence is ABC transporter B family member 3 (1432 aa).

2 disordered regions span residues 1 to 21 (MDDG…EEEI) and 48 to 149 (ITQP…KTEE). Composition is skewed to low complexity over residues 52 to 62 (SNNNNNSNNNN), 76 to 106 (NNNN…FNNN), and 118 to 135 (NTNE…NNND). A coiled-coil region spans residues 117-163 (ENTNENNNKNNNNNNNNNDDYNDGADERVKTEEEIKKEAENELNQSV). The 300-residue stretch at 180 to 479 (MFLGTIAAVI…ASPCLALFAQ (300 aa)) folds into the ABC transmembrane type-1 1 domain. 6 helical membrane passes run 185 to 205 (IAAV…GLVV), 232 to 252 (LLML…LWMI), 303 to 323 (KVGR…IGFT), 325 to 345 (GWQL…GGFF), 410 to 430 (GLGL…AFWY), and 457 to 477 (FFAV…LALF). In terms of domain architecture, ABC transporter 1 spans 514–750 (IEFKDVGFHY…QGLYFDLVEK (237 aa)). Residue 549–556 (GDSGGGKS) participates in ATP binding. The disordered stretch occupies residues 787-819 (KRSLRKNESESNKKDKEDSNNKKKKKSNKKKVE). Residues 791 to 807 (RKNESESNKKDKEDSNN) are compositionally biased toward basic and acidic residues. An ABC transmembrane type-1 2 domain is found at 837–1157 (WCFGFLSAVG…ASSFAPDLAK (321 aa)). Helical transmembrane passes span 838 to 858 (CFGF…AMVF), 882 to 902 (LMFV…GFLF), 968 to 988 (MVGG…VIIA), 989 to 1009 (CFPL…GFSS), 1060 to 1080 (ISGF…CLSF), and 1134 to 1154 (VFFA…FAPD). Residues 1192–1428 (IEFKNLHFSY…EGPYSQLWYN (237 aa)) enclose the ABC transporter 2 domain. Residue 1227 to 1234 (GDSGGGKS) participates in ATP binding.

It belongs to the ABC transporter superfamily. ABCB family. Multidrug resistance exporter (TC 3.A.1.201) subfamily.

The protein resides in the membrane. The protein is ABC transporter B family member 3 (abcB3) of Dictyostelium discoideum (Social amoeba).